The primary structure comprises 146 residues: Hemoglobin subunit beta (146 aa).

The residue at position 1 (V1) is an N-acetylvaline. The region spanning 2–146 is the Globin domain; that stretch reads HLTGEEKAAV…VANALAHKYH (145 aa). T12 carries the phosphothreonine modification. At S44 the chain carries Phosphoserine. K59 carries the N6-acetyllysine modification. H63 is a binding site for heme b. N6-acetyllysine is present on K82. H92 is a binding site for heme b. At C93 the chain carries S-nitrosocysteine. An N6-acetyllysine modification is found at K144.

This sequence belongs to the globin family. As to quaternary structure, heterotetramer of two alpha chains and two beta chains. As to expression, red blood cells.

In terms of biological role, involved in oxygen transport from the lung to the various peripheral tissues. The sequence is that of Hemoglobin subunit beta (HBB) from Mustela putorius furo (European domestic ferret).